Reading from the N-terminus, the 323-residue chain is Serine/threonine-protein phosphatase PP1-gamma catalytic subunit (323 aa).

Residue Ala2 is modified to N-acetylalanine. Asp64, His66, Asp92, and Asn124 together coordinate Mn(2+). His125 functions as the Proton donor in the catalytic mechanism. The Mn(2+) site is built by His173 and His248. The segment at 302 to 323 (KKPNATRPVTPPRGMITKQAKK) is disordered. A phosphothreonine mark is found at Thr307 and Thr311.

This sequence belongs to the PPP phosphatase family. PP-1 subfamily. In terms of assembly, PP1 comprises a catalytic subunit, PPP1CA, PPP1CB or PPP1CC, which is folded into its native form by inhibitor 2 and glycogen synthetase kinase 3, and then complexed to one or several targeting or regulatory subunits. PPP1R12A, PPP1R12B and PPP1R12C mediate binding to myosin. PPP1R3A (in skeletal muscle), PPP1R3B (in liver), PPP1R3C, PPP1R3D and PPP1R3F (in brain) mediate binding to glycogen. Interacts with cyanobacterial toxin microcystin; disulfide-linked. Interacts with PPP1R3B and PPP1R7. Isoform 2 interacts with SPZ1. Interacts with CDCA2. PPP1R15A and PPP1R15B mediate binding to EIF2S1. Part of a complex containing PPP1R15B, PP1 and NCK1/2. Interacts with IKFZ1; the interaction targets PPP1CC to pericentromeric heterochromatin, dephosphorylates IKAROS, stabilizes it and prevents it from degradation. Interacts with PPP1R42; the interaction is direct. Interacts with NOM1 and PPP1R8. Component of the PTW/PP1 phosphatase complex, composed of PPP1R10/PNUTS, TOX4, WDR82, and PPP1CA or PPP1CB or PPP1CC. Interacts with PPP1R8. Interacts with isoform 1 and isoform 4 NEK2. Interacts with URI1; the interaction is phosphorylation-dependent and occurs in a growth factor-dependent manner. Interacts with FOXP3. Interacts with TMEM225 (via RVxF motif). Interacts with MKI67. Interacts with RRP1B; this targets PPP1CC to the nucleolus. Interacts with PPP1R2B. Found in a complex with PPP1CA, PPP1CC, SHC1 and PEAK1. Interacts with DYNLT4. Interacts (via RVxF motif) with FIRRM; regulates PLK1 kinase activity. Interacts with the KNL1 complex subunit KNL1; the interaction is direct and mutually exclusive with KNL1 binding to microtubules. Component of the SHOC2-MRAS-PP1c (SMP) complex consisting of SHOC2, GTP-bound M-Ras/MRAS and the catalytic subunit of protein phosphatase 1 (either PPP1CA, PPP1CB or PPP1CC). SHOC2 and PP1c preferably bind M-Ras/MRAS, but they also bind K-Ras/KRAS, N-Ras/NRAS and H-Ras/HRAS; these interactions are GTP-dependent and both SHOC2 and PP1c are required to form a stable complex. Interacts with SHOC2 in the absence of Ras GTPases. Mn(2+) is required as a cofactor. Phosphorylated by NEK2.

The protein localises to the cytoplasm. It localises to the nucleus. Its subcellular location is the nucleolus. The protein resides in the nucleoplasm. It is found in the nucleus speckle. The protein localises to the chromosome. It localises to the centromere. Its subcellular location is the kinetochore. The protein resides in the cleavage furrow. It is found in the midbody. The protein localises to the mitochondrion. It localises to the cytoskeleton. Its subcellular location is the microtubule organizing center. It carries out the reaction O-phospho-L-seryl-[protein] + H2O = L-seryl-[protein] + phosphate. It catalyses the reaction O-phospho-L-threonyl-[protein] + H2O = L-threonyl-[protein] + phosphate. With respect to regulation, inactivated by binding to URI1. The phosphatase activity of the PPP1R15A-PP1 complex toward EIF2S1 is specifically inhibited by Salubrinal, a drug that protects cells from endoplasmic reticulum stress. Protein phosphatase that associates with over 200 regulatory proteins to form highly specific holoenzymes which dephosphorylate hundreds of biological targets. Protein phosphatase 1 (PP1) is essential for cell division, and participates in the regulation of glycogen metabolism, muscle contractility and protein synthesis. Dephosphorylates RPS6KB1. Involved in regulation of ionic conductances and long-term synaptic plasticity. May play an important role in dephosphorylating substrates such as the postsynaptic density-associated Ca(2+)/calmodulin dependent protein kinase II. Component of the PTW/PP1 phosphatase complex, which plays a role in the control of chromatin structure and cell cycle progression during the transition from mitosis into interphase. In balance with CSNK1D and CSNK1E, determines the circadian period length, through the regulation of the speed and rhythmicity of PER1 and PER2 phosphorylation. May dephosphorylate CSNK1D and CSNK1E. Regulates the recruitment of the SKA complex to kinetochores. Dephosphorylates the 'Ser-418' residue of FOXP3 in regulatory T-cells (Treg) from patients with rheumatoid arthritis, thereby inactivating FOXP3 and rendering Treg cells functionally defective. Together with PPP1CA (PP1-alpha subunit), dephosphorylates IFIH1/MDA5 and RIG-I leading to their activation and a functional innate immune response. Core component of the SHOC2-MRAS-PP1c (SMP) holophosphatase complex that regulates the MAPK pathway activation. The SMP complex specifically dephosphorylates the inhibitory phosphorylation at 'Ser-259' of RAF1 kinase, 'Ser-365' of BRAF kinase and 'Ser-214' of ARAF kinase, stimulating their kinase activities. Dephosphorylates MKI67 at the onset of anaphase. The SMP complex enhances the dephosphorylation activity and substrate specificity of PP1c. The chain is Serine/threonine-protein phosphatase PP1-gamma catalytic subunit (PPP1CC) from Homo sapiens (Human).